Here is a 1017-residue protein sequence, read N- to C-terminus: Formin-binding protein 4 (1017 aa).

Disordered stretches follow at residues 1 to 141 and 160 to 202; these read MGKK…STDI and PAAP…TSGW. Phosphoserine is present on S18. Over residues 40–69 the composition is skewed to low complexity; the sequence is DSTAAVPSQPAPSAATTTTTAVTAAAASDD. S116 and S124 each carry phosphoserine. The segment covering 130–141 has biased composition (polar residues); that stretch reads SKETNGNQSTDI. T172 carries the phosphothreonine modification. The segment covering 181–200 has biased composition (low complexity); that stretch reads AATSTLSSSTSNGTDSTQTS. One can recognise a WW 1 domain in the interval 214 to 248; sequence GIEMGDWQEVWDENTGCYYYWNTQTNEVTWELPQY. K290 bears the N6-acetyllysine mark. A Glycyl lysine isopeptide (Lys-Gly) (interchain with G-Cter in SUMO1) cross-link involves residue K301. A Glycyl lysine isopeptide (Lys-Gly) (interchain with G-Cter in SUMO2) cross-link involves residue K335. K348 participates in a covalent cross-link: Glycyl lysine isopeptide (Lys-Gly) (interchain with G-Cter in SUMO1); alternate. K348 participates in a covalent cross-link: Glycyl lysine isopeptide (Lys-Gly) (interchain with G-Cter in SUMO2); alternate. Disordered stretches follow at residues 421-519, 621-676, 706-792, and 899-994; these read LEEG…TTPK, ESQW…CKES, PLPL…IKRK, and TATI…AERN. A phosphoserine mark is found at S427, S432, S435, S438, and S442. Residues 428–442 are compositionally biased toward polar residues; the sequence is VSGSSPRSDISQPAS. Residues 449-458 show a composition bias toward basic residues; the sequence is LMSKRGKWKM. The segment covering 461 to 474 has biased composition (low complexity); the sequence is RATSPESTSRSSSK. A Phosphoserine modification is found at S464. Phosphothreonine is present on T479. Positions 491-513 are enriched in basic and acidic residues; that stretch reads NSEKIDENSDKEMEVEESPEKIK. Phosphoserine is present on residues S499 and S508. Phosphothreonine occurs at positions 516 and 517. K519 is covalently cross-linked (Glycyl lysine isopeptide (Lys-Gly) (interchain with G-Cter in SUMO1); alternate). A Glycyl lysine isopeptide (Lys-Gly) (interchain with G-Cter in SUMO2); alternate cross-link involves residue K519. The 35-residue stretch at 595–629 folds into the WW 2 domain; sequence NATPKGWSCHWDRDHRRYFYVNEQSGESQWEFPDG. Over residues 627 to 637 the composition is skewed to acidic residues; sequence PDGEEEEEESQ. A compositionally biased stretch (basic and acidic residues) spans 640–656; the sequence is ENRDETLAKQTLKDKTG. Over residues 657–671 the composition is skewed to low complexity; it reads TDSNSTESSETSTGS. Over residues 706–732 the composition is skewed to pro residues; the sequence is PLPLEMPPPPPPPPESPPPPPPPPPPA. Positions 733–748 are enriched in acidic residues; the sequence is EDGEIQEVEMEDEGSE. Over residues 764 to 786 the composition is skewed to low complexity; sequence SAQTTVVTSQSSVDSTISSSSST. Residues 904 to 925 show a composition bias toward pro residues; sequence EPPPPPPPPPPPPPPAPKMPPP. The segment covering 929–941 has biased composition (basic residues); it reads KKGRKDKAKKSKT. Positions 957 to 970 are enriched in acidic residues; sequence LDEEDNSSSSEEDR. A phosphoserine mark is found at S963, S964, and S965. A compositionally biased stretch (basic and acidic residues) spans 971-982; sequence ESTAQKRIEEWK.

In terms of assembly, binds FMN1. Interacts with the Arg/Gly-rich-flanked Pro-rich of KHDRBS1/SAM68. Arginine methylation in these regions has no effect on this binding. Highly expressed in the eye.

The sequence is that of Formin-binding protein 4 (FNBP4) from Homo sapiens (Human).